Consider the following 163-residue polypeptide: Cyanate hydratase (163 aa).

Residues R103, E106, and S129 contribute to the active site.

Belongs to the cyanase family.

The enzyme catalyses cyanate + hydrogencarbonate + 3 H(+) = NH4(+) + 2 CO2. Catalyzes the reaction of cyanate with bicarbonate to produce ammonia and carbon dioxide. The sequence is that of Cyanate hydratase from Paracoccidioides brasiliensis (strain Pb18).